We begin with the raw amino-acid sequence, 133 residues long: S-protein homolog 21 (133 aa).

Residues 1-21 (MKNLSIFLFVVGLCMISDVYG) form the signal peptide.

This sequence belongs to the plant self-incompatibility (S1) protein family.

The protein localises to the secreted. The polypeptide is S-protein homolog 21 (Arabidopsis thaliana (Mouse-ear cress)).